Here is an 87-residue protein sequence, read N- to C-terminus: Cuticle protein 1 (87 aa).

Gln1 carries the pyrrolidone carboxylic acid modification. 3 tandem repeats follow at residues 5–20, 43–58, and 71–86. 3 cysteine pairs are disulfide-bonded: Cys14/Cys20, Cys52/Cys58, and Cys80/Cys86.

This is Cuticle protein 1 from Blaberus craniifer (Death's head cockroach).